Reading from the N-terminus, the 707-residue chain is Integrator complex subunit 13 (707 aa).

Positions 565-625 (PPEEEERKKR…AEAEVIKDSP (61 aa)) are enriched in basic and acidic residues. The tract at residues 565–651 (PPEEEERKKR…TGPAEKSKGP (87 aa)) is disordered. The stretch at 567–622 (EEEERKKRGRKREDKEEKAEKPPKENEHEKKWQESERVKSVLDREKEDLAEAEVIK) forms a coiled coil. The Nuclear localization signal (NLS) signature appears at 573–583 (KRGRKREDKEE). The cleavage module binding motif (CMBM) stretch occupies residues 650–695 (GPMSLLSLWSSRINTANSRKHQEFVGRLNSVNNKAELYQHLKEENG).

Belongs to the Integrator subunit 13 family. In terms of assembly, component of the Integrator complex, composed of core subunits INTS1, INTS2, INTS3, INTS4, INTS5, INTS6, INTS7, INTS8, INTS9/RC74, INTS10, INTS11/CPSF3L, INTS12, INTS13, INTS14 and INTS15. The core complex associates with protein phosphatase 2A subunits PPP2CA and PPP2R1A, to form the Integrator-PP2A (INTAC) complex. INTS13 is part of the tail subcomplex, composed of INTS10, INTS13, INTS14 and INTS15.

Its subcellular location is the nucleus. The protein localises to the cytoplasm. Its function is as follows. Component of the integrator complex, a multiprotein complex that terminates RNA polymerase II (Pol II) transcription in the promoter-proximal region of genes. The integrator complex provides a quality checkpoint during transcription elongation by driving premature transcription termination of transcripts that are unfavorably configured for transcriptional elongation: the complex terminates transcription by (1) catalyzing dephosphorylation of the C-terminal domain (CTD) of Pol II subunit POLR2A/RPB1 and SUPT5H/SPT5, (2) degrading the exiting nascent RNA transcript via endonuclease activity and (3) promoting the release of Pol II from bound DNA. The integrator complex is also involved in terminating the synthesis of non-coding Pol II transcripts, such as enhancer RNAs (eRNAs), small nuclear RNAs (snRNAs), telomerase RNAs and long non-coding RNAs (lncRNAs). Within the integrator complex, INTS13 is part of the integrator tail module and acts as a platform for the recruitment of transcription factors at promoters. The sequence is that of Integrator complex subunit 13 from Xenopus tropicalis (Western clawed frog).